A 463-amino-acid polypeptide reads, in one-letter code: Ataxin-10 homolog (463 aa).

This sequence belongs to the ataxin-10 family.

It is found in the cytoplasm. Functionally, may play a role in the regulation of cytokinesis. The polypeptide is Ataxin-10 homolog (CTR86) (Candida albicans (strain SC5314 / ATCC MYA-2876) (Yeast)).